A 555-amino-acid polypeptide reads, in one-letter code: Glutamine--tRNA ligase (555 aa).

Residues 35–45 carry the 'HIGH' region motif; sequence PEPNGYLHIGH. ATP-binding positions include 36-38 and 42-48; these read EPN and HIGHAKS. Residues aspartate 68 and tyrosine 213 each contribute to the L-glutamine site. Residues threonine 232, 262–263, and 270–272 each bind ATP; these read RL and MSK. The 'KMSKS' region signature appears at 269-273; the sequence is VMSKR.

The protein belongs to the class-I aminoacyl-tRNA synthetase family. As to quaternary structure, monomer.

The protein resides in the cytoplasm. It carries out the reaction tRNA(Gln) + L-glutamine + ATP = L-glutaminyl-tRNA(Gln) + AMP + diphosphate. The chain is Glutamine--tRNA ligase from Photobacterium profundum (strain SS9).